A 505-amino-acid polypeptide reads, in one-letter code: ATP synthase subunit alpha, chloroplastic (505 aa).

170–177 is an ATP binding site; sequence GDRQTGKT.

Belongs to the ATPase alpha/beta chains family. F-type ATPases have 2 components, CF(1) - the catalytic core - and CF(0) - the membrane proton channel. CF(1) has five subunits: alpha(3), beta(3), gamma(1), delta(1), epsilon(1). CF(0) has four main subunits: a, b, b' and c.

It is found in the plastid. Its subcellular location is the chloroplast thylakoid membrane. The enzyme catalyses ATP + H2O + 4 H(+)(in) = ADP + phosphate + 5 H(+)(out). In terms of biological role, produces ATP from ADP in the presence of a proton gradient across the membrane. The alpha chain is a regulatory subunit. This Oenothera elata subsp. hookeri (Hooker's evening primrose) protein is ATP synthase subunit alpha, chloroplastic.